The sequence spans 348 residues: Aspartate carbamoyltransferase catalytic subunit (348 aa).

Residues Arg-59 and Thr-60 each contribute to the carbamoyl phosphate site. Lys-87 contacts L-aspartate. Residues Arg-109, His-142, and Gln-145 each contribute to the carbamoyl phosphate site. Residues Arg-182 and Arg-253 each coordinate L-aspartate. Residues Gly-294 and Pro-295 each contribute to the carbamoyl phosphate site.

It belongs to the aspartate/ornithine carbamoyltransferase superfamily. ATCase family. As to quaternary structure, heterododecamer (2C3:3R2) of six catalytic PyrB chains organized as two trimers (C3), and six regulatory PyrI chains organized as three dimers (R2).

The enzyme catalyses carbamoyl phosphate + L-aspartate = N-carbamoyl-L-aspartate + phosphate + H(+). Its pathway is pyrimidine metabolism; UMP biosynthesis via de novo pathway; (S)-dihydroorotate from bicarbonate: step 2/3. Its function is as follows. Catalyzes the condensation of carbamoyl phosphate and aspartate to form carbamoyl aspartate and inorganic phosphate, the committed step in the de novo pyrimidine nucleotide biosynthesis pathway. This chain is Aspartate carbamoyltransferase catalytic subunit, found in Prochlorococcus marinus (strain MIT 9303).